Here is a 344-residue protein sequence, read N- to C-terminus: Uroporphyrinogen decarboxylase (344 aa).

Residues 23–27 (RQAGR), aspartate 73, tyrosine 149, threonine 204, and histidine 321 each bind substrate.

It belongs to the uroporphyrinogen decarboxylase family. Homodimer.

The protein resides in the cytoplasm. It catalyses the reaction uroporphyrinogen III + 4 H(+) = coproporphyrinogen III + 4 CO2. It participates in porphyrin-containing compound metabolism; protoporphyrin-IX biosynthesis; coproporphyrinogen-III from 5-aminolevulinate: step 4/4. In terms of biological role, catalyzes the decarboxylation of four acetate groups of uroporphyrinogen-III to yield coproporphyrinogen-III. This chain is Uroporphyrinogen decarboxylase, found in Francisella tularensis subsp. tularensis (strain FSC 198).